The following is a 236-amino-acid chain: Small ribosomal subunit protein uS2c (236 aa).

Belongs to the universal ribosomal protein uS2 family.

Its subcellular location is the plastid. It is found in the chloroplast. This Oryza sativa (Rice) protein is Small ribosomal subunit protein uS2c (rps2).